The chain runs to 248 residues: tRNA pseudouridine synthase A (248 aa).

The active-site Nucleophile is the Asp-53. Tyr-111 serves as a coordination point for substrate.

It belongs to the tRNA pseudouridine synthase TruA family. In terms of assembly, homodimer.

The enzyme catalyses uridine(38/39/40) in tRNA = pseudouridine(38/39/40) in tRNA. Its function is as follows. Formation of pseudouridine at positions 38, 39 and 40 in the anticodon stem and loop of transfer RNAs. The chain is tRNA pseudouridine synthase A from Listeria monocytogenes serotype 4a (strain HCC23).